The sequence spans 221 residues: Casparian strip membrane protein 2 (221 aa).

The tract at residues 1 to 21 (MEKSEATTIEIGETSRESKGK) is disordered. The Cytoplasmic portion of the chain corresponds to 1–41 (MEKSEATTIEIGETSRESKGKTPLLAEVEQTARTAGSYRRG). The chain crosses the membrane as a helical span at residues 42-62 (VAIFDLILRVSAATSALAATI). Residues 63 to 89 (TMGTTEQTLPFFTQFFQFQASYDDLPA) are Extracellular-facing. A helical membrane pass occupies residues 90-110 (FTFFVIALSIVTGYLVLSVPF). The Cytoplasmic portion of the chain corresponds to 111-131 (SVVCIAQPLAAVPRLLLIVCD). A helical transmembrane segment spans residues 132-152 (TLTVTLATAAASSSAAIVYLA). Topologically, residues 153-221 (HNGNADANWL…HYWDRRWCEI (69 aa)) are extracellular.

The protein belongs to the Casparian strip membrane proteins (CASP) family. As to quaternary structure, homodimer and heterodimers.

The protein resides in the cell membrane. Functionally, regulates membrane-cell wall junctions and localized cell wall deposition. Required for establishment of the Casparian strip membrane domain (CSD) and the subsequent formation of Casparian strips, a cell wall modification of the root endodermis that determines an apoplastic barrier between the intraorganismal apoplasm and the extraorganismal apoplasm and prevents lateral diffusion. This is Casparian strip membrane protein 2 from Erythranthe guttata (Yellow monkey flower).